A 516-amino-acid chain; its full sequence is MVIARGLLRSNASSSSSQAINLLKYVTSTGSLQGHTQNLCDASTRHFSSVPSPQYNSTEENGFKGHGMLAPFTAGWQSTDVHPLVIERSEGSYVYDIDGKKYLDSLAGLWCTALGGSEPRLVKAATEQLHKLPFYHSFWNRTTKPSLDLAKELLSMFTAREMGKVFFTNSGSEANDSQVKLVWYYNNALGRPDKKKFIARSKSYHGSTLISASLSGLPALHQKFDLPAPFVLHTDCPHYWRFHLPGETEEEFATRLANNLEELILKEGPETIAAFIAEPVMGAGGVIPPPKTYFEKVQAIVKKYDILFIADEVITAFGRLGTMFGSDMYNIKPDLVSMAKALSSAYVPIGAIMVSPEISDVIHSQSNKLGSFAHGFTYSGHPVACAVAIEALKIYQERNIPDHVKQISPRFQEGVKAFAGSPIVGEIRGVGLILGTEFADNKSPNDPFPAEWGVGAIFGAECQKRGMLVRVAGDNIMMSPPLIMTPDEVEELVSIYGDALKATEERVAELKSKKNN.

Residues 1–47 constitute a mitochondrion transit peptide; it reads MVIARGLLRSNASSSSSQAINLLKYVTSTGSLQGHTQNLCDASTRHF. A pyridoxal 5'-phosphate-binding site is contributed by 171–172; it reads GS. A substrate-binding site is contributed by Tyr204. Asp311 serves as a coordination point for pyridoxal 5'-phosphate. Lys340 serves as a coordination point for substrate. Lys340 is modified (N6-(pyridoxal phosphate)lysine).

Belongs to the class-III pyridoxal-phosphate-dependent aminotransferase family. As to expression, expressed in roots, stems and panicles.

It localises to the mitochondrion. The catalysed reaction is 4-aminobutanoate + pyruvate = succinate semialdehyde + L-alanine. It carries out the reaction 4-aminobutanoate + glyoxylate = succinate semialdehyde + glycine. Its function is as follows. Transaminase that degrades gamma-amino butyric acid (GABA) and uses pyruvate as amino-group acceptor, but not 2-oxoglutarate. Not involved in the interaction with blast fungus. This Oryza sativa subsp. japonica (Rice) protein is Gamma-aminobutyrate transaminase 1, mitochondrial (OSL2).